The primary structure comprises 259 residues: UPF0246 protein NMCC_0856 (259 aa).

It belongs to the UPF0246 family.

This is UPF0246 protein NMCC_0856 from Neisseria meningitidis serogroup C (strain 053442).